Reading from the N-terminus, the 760-residue chain is UDP-N-acetylmuramoyl-L-alanyl-D-glutamate--2,6-diaminopimelate ligase MurE homolog, chloroplastic (760 aa).

Residues 1-59 (MATAPLAFRLPFPFSFPSASRPPPSRILAPPTPRRLPLRLAAAAARRFRPPTADDEPPE) constitute a chloroplast transit peptide. Disordered stretches follow at residues 13–159 (PFSF…TDEL) and 176–205 (LSVV…DEDG). Over residues 20–34 (SRPPPSRILAPPTPR) the composition is skewed to pro residues. The segment covering 53–62 (ADDEPPEAAE) has biased composition (acidic residues). Positions 118–132 (EIDRAIAEKREEFTR) are enriched in basic and acidic residues. Composition is skewed to acidic residues over residues 150–159 (PEDEDLTDEL) and 182–205 (ADEE…DEDG).

This sequence belongs to the MurCDEF family. MurE subfamily. In terms of assembly, component of the plastid-encoded plastid RNA polymerase (PEP) complex.

The protein localises to the plastid. Its subcellular location is the chloroplast. Its function is as follows. Required for the activity of the plastid-encoded RNA polymerase (PEP) and full expression of genes transcribed by PEP. Required for the proper build-up and formation of the PEP-complex. The sequence is that of UDP-N-acetylmuramoyl-L-alanyl-D-glutamate--2,6-diaminopimelate ligase MurE homolog, chloroplastic from Zea mays (Maize).